Reading from the N-terminus, the 288-residue chain is Bifunctional protein FolD (288 aa).

NADP(+) contacts are provided by residues 166-168 (GAS) and Ile-232.

It belongs to the tetrahydrofolate dehydrogenase/cyclohydrolase family. Homodimer.

It carries out the reaction (6R)-5,10-methylene-5,6,7,8-tetrahydrofolate + NADP(+) = (6R)-5,10-methenyltetrahydrofolate + NADPH. The enzyme catalyses (6R)-5,10-methenyltetrahydrofolate + H2O = (6R)-10-formyltetrahydrofolate + H(+). Its pathway is one-carbon metabolism; tetrahydrofolate interconversion. Catalyzes the oxidation of 5,10-methylenetetrahydrofolate to 5,10-methenyltetrahydrofolate and then the hydrolysis of 5,10-methenyltetrahydrofolate to 10-formyltetrahydrofolate. The polypeptide is Bifunctional protein FolD (Salmonella enteritidis PT4 (strain P125109)).